Consider the following 361-residue polypeptide: Hydroxycarboxylate dehydrogenase B (361 aa).

Residues His-48, 122 to 124, 178 to 182, His-234, Asn-270, and 313 to 316 contribute to the NAD(+) site; these read GRI, LLDYA, and GEWE.

Belongs to the LDH2/MDH2 oxidoreductase family.

It carries out the reaction 2-hydroxyglutarate + NADP(+) = 2-oxoglutarate + NADPH + H(+). The enzyme catalyses 2-hydroxyglutarate + NAD(+) = 2-oxoglutarate + NADH + H(+). It catalyses the reaction 3-phenyllactate + NADP(+) = 3-phenylpyruvate + NADPH + H(+). The catalysed reaction is 3-phenyllactate + NAD(+) = 3-phenylpyruvate + NADH + H(+). It carries out the reaction (2R)-2-hydroxy-3-(4-hydroxyphenyl)propanoate + NAD(+) = 3-(4-hydroxyphenyl)pyruvate + NADH + H(+). The enzyme catalyses (2R)-2-hydroxy-3-(4-hydroxyphenyl)propanoate + NADP(+) = 3-(4-hydroxyphenyl)pyruvate + NADPH + H(+). It catalyses the reaction (2R)-3-(3,4-dihydroxyphenyl)lactate + NADP(+) = 3-(3,4-dihydroxyphenyl)pyruvate + NADPH + H(+). The catalysed reaction is (2R)-3-(3,4-dihydroxyphenyl)lactate + NAD(+) = 3-(3,4-dihydroxyphenyl)pyruvate + NADH + H(+). In terms of biological role, catalyzes the NAD(P)H-dependent reduction of 2-oxoglutarate, phenylpyruvate and (4-hydroxyphenyl)pyruvate, leading to the respective 2-hydroxycarboxylate in vitro. Shows a preference for NADPH over NADH as a redox partner. Do not catalyze the reverse reactions. The chain is Hydroxycarboxylate dehydrogenase B from Escherichia coli (strain K12).